The sequence spans 328 residues: MEKNYYALAYYYFGPVSNPHEEIALHKQLFKTMDVSCRIYISEEGINGQFSGYQPDAERYMAWLKQRPDFATVKFKIHHIKENVFPRVTVKYRKELVALGCSVDTSKQGKHISPEEWHEKLQENRCLVLDVRNNYEWKIGHFENAVLPDIETFREFPAYADRLAQEHAPETTPVMMYCTGGIRCELYSALLLEKGFKEVYQLDGGVIAYGLKMGTGKWKGKLFVFDDRMAVPINEADPNVSPISKCSLCDIESDTYYNCANTDCNNLFLCCESCITSQKGCCSEECSQAPRIRTFSAERGNKPFRRKHLCPTIEQTRCCLREKDNQPA.

Residues glutamine 122–tryptophan 218 form the Rhodanese domain. The active-site Cysteine persulfide intermediate is cysteine 178.

The protein belongs to the TrhO family.

It carries out the reaction uridine(34) in tRNA + AH2 + O2 = 5-hydroxyuridine(34) in tRNA + A + H2O. Catalyzes oxygen-dependent 5-hydroxyuridine (ho5U) modification at position 34 in tRNAs. The polypeptide is tRNA uridine(34) hydroxylase (Chlamydia muridarum (strain MoPn / Nigg)).